A 138-amino-acid chain; its full sequence is MSDAVDKMLAGMAANRQTMNRQLAKIDEIMERSNNTLLHIESNSKAFSQNVALSETQKMYNLRPEAEMTLSKILENFKLLMSSSDQREETYSALEGCLAYRHRVEHLGSSVRKLVALYDTVGQMKNSQEEQYASEDSP.

Component of the augmin complex composed of dgt2, dgt3, dgt4, dgt5, dgt6, msd1, msd5 and wac. The complex interacts directly or indirectly with microtubules and is required for centrosome-independent generation of spindle microtubules.

The protein resides in the cytoplasm. It is found in the cytoskeleton. The protein localises to the spindle. Functionally, as part of the augmin complex, plays a role in centrosome-independent generation of spindle microtubules. The complex is required for mitotic spindle assembly through its involvement in localizing gamma-tubulin to spindle microtubules. msd1 is required for microtubule nucleation from within the mitotic spindle and for localization of Grip71 to centrosomes and mitotic spindle. This chain is Augmin complex subunit msd1, found in Drosophila melanogaster (Fruit fly).